The chain runs to 173 residues: Siroheme decarboxylase alpha subunit (173 aa).

H115 and R119 together coordinate substrate.

It belongs to the Ahb/Nir family. Forms a heterodimer composed of AhbA and AhbB.

It carries out the reaction siroheme + 2 H(+) = 12,18-didecarboxysiroheme + 2 CO2. The protein operates within porphyrin-containing compound metabolism; protoheme biosynthesis. Its function is as follows. Involved in siroheme-dependent heme b biosynthesis. Catalyzes the decarboxylation of siroheme into didecarboxysiroheme. Siroheme is decarboxylated to monodecarboxysiroheme, which is in turn decarboxylated to didecarboxysiroheme. This Desulfovibrio desulfuricans (strain ATCC 27774 / DSM 6949 / MB) protein is Siroheme decarboxylase alpha subunit.